Consider the following 273-residue polypeptide: Pantothenate synthetase (273 aa).

Residue 27–34 coordinates ATP; that stretch reads MGALHEGH. Histidine 34 serves as the catalytic Proton donor. Residue glutamine 58 participates in (R)-pantoate binding. Glutamine 58 contacts beta-alanine. 144-147 contributes to the ATP binding site; it reads GKKD. Glutamine 150 lines the (R)-pantoate pocket. ATP is bound by residues valine 173 and 181 to 184; that span reads LSSR.

It belongs to the pantothenate synthetase family. As to quaternary structure, homodimer.

It is found in the cytoplasm. It carries out the reaction (R)-pantoate + beta-alanine + ATP = (R)-pantothenate + AMP + diphosphate + H(+). It functions in the pathway cofactor biosynthesis; (R)-pantothenate biosynthesis; (R)-pantothenate from (R)-pantoate and beta-alanine: step 1/1. In terms of biological role, catalyzes the condensation of pantoate with beta-alanine in an ATP-dependent reaction via a pantoyl-adenylate intermediate. The polypeptide is Pantothenate synthetase (Sulfurimonas denitrificans (strain ATCC 33889 / DSM 1251) (Thiomicrospira denitrificans (strain ATCC 33889 / DSM 1251))).